The following is a 128-amino-acid chain: Probable 4-amino-4-deoxy-L-arabinose-phosphoundecaprenol flippase subunit ArnF (128 aa).

Residues 1 to 2 (MG) are Cytoplasmic-facing. Residues 3-23 (LMWGLFSVIIASVAQLSLGFA) form a helical membrane-spanning segment. At 24–35 (ASHLPPMTHLWD) the chain is on the periplasmic side. The chain crosses the membrane as a helical span at residues 36-56 (FIAALLAFGLDARILLLGLLG). The Cytoplasmic segment spans residues 57 to 76 (YLLSVFCWYKTLHKLALSKA). Residues 77-97 (YALLSMSYVLVWIASMVLPGW) traverse the membrane as a helical segment. The Periplasmic portion of the chain corresponds to 98–100 (EGT). A helical transmembrane segment spans residues 101–121 (FSLKALLGVACIMSGLMLIFL). At 122-128 (PTTKQRY) the chain is on the cytoplasmic side.

Belongs to the ArnF family. In terms of assembly, heterodimer of ArnE and ArnF.

It localises to the cell inner membrane. It participates in bacterial outer membrane biogenesis; lipopolysaccharide biosynthesis. Translocates 4-amino-4-deoxy-L-arabinose-phosphoundecaprenol (alpha-L-Ara4N-phosphoundecaprenol) from the cytoplasmic to the periplasmic side of the inner membrane. In Shigella sonnei (strain Ss046), this protein is Probable 4-amino-4-deoxy-L-arabinose-phosphoundecaprenol flippase subunit ArnF.